A 267-amino-acid chain; its full sequence is tRNA pseudouridine synthase A (267 aa).

The active-site Nucleophile is D55. Position 111 (Y111) interacts with substrate.

The protein belongs to the tRNA pseudouridine synthase TruA family.

The enzyme catalyses uridine(38/39/40) in tRNA = pseudouridine(38/39/40) in tRNA. Its function is as follows. Formation of pseudouridine at positions 38, 39 and 40 in the anticodon stem and loop of transfer RNAs. The chain is tRNA pseudouridine synthase A from Thermococcus gammatolerans (strain DSM 15229 / JCM 11827 / EJ3).